A 118-amino-acid polypeptide reads, in one-letter code: Small ribosomal subunit protein uS13 (118 aa).

The interval valine 97 to lysine 118 is disordered.

It belongs to the universal ribosomal protein uS13 family. In terms of assembly, part of the 30S ribosomal subunit. Forms a loose heterodimer with protein S19. Forms two bridges to the 50S subunit in the 70S ribosome.

Its function is as follows. Located at the top of the head of the 30S subunit, it contacts several helices of the 16S rRNA. In the 70S ribosome it contacts the 23S rRNA (bridge B1a) and protein L5 of the 50S subunit (bridge B1b), connecting the 2 subunits; these bridges are implicated in subunit movement. Contacts the tRNAs in the A and P-sites. The chain is Small ribosomal subunit protein uS13 from Buchnera aphidicola subsp. Schizaphis graminum (strain Sg).